Consider the following 197-residue polypeptide: MLTQSLFLTVLTLALSLVSKTSASQCSPRYGTCGGIYYDGPTCCVVGSSCIYSNPWYSQCIPVDYTGPCAKLYQQCGGINYNGPTCCEPGSECIYNGPYYSQCIPVDIDPSSSSSSAASSTTSTTSSSSLVSSTTLTSSSPSAVSSTTSIPSISSTISSSVSTSSFTSLSSSGFSTVLSSTNTTSALPSSGWNVTGY.

Positions 1–23 (MLTQSLFLTVLTLALSLVSKTSA) are cleaved as a signal peptide. CBM1 domains are found at residues 25 to 61 (QCSPRYGTCGGIYYDGPTCCVVGSSCIYSNPWYSQCI) and 68 to 104 (PCAKLYQQCGGINYNGPTCCEPGSECIYNGPYYSQCI). Disulfide bonds link C33-C50, C44-C60, C76-C93, and C87-C103. The disordered stretch occupies residues 115–163 (SSAASSTTSTTSSSSLVSSTTLTSSSPSAVSSTTSIPSISSTISSSVST). 2 N-linked (GlcNAc...) asparagine glycosylation sites follow: N182 and N193.

It is found in the secreted. This Schizosaccharomyces pombe (strain 972 / ATCC 24843) (Fission yeast) protein is Carbohydrate-binding domain-containing protein C2E1P3.05c.